The primary structure comprises 1791 residues: 1-phosphatidylinositol-3-phosphate 5-kinase FAB1B (1791 aa).

The segment at 39-105 adopts an FYVE-type zinc-finger fold; it reads DQSCRVCYEC…VCNYCFRQWE (67 aa). 8 residues coordinate Zn(2+): cysteine 45, cysteine 48, cysteine 61, cysteine 64, cysteine 69, cysteine 72, cysteine 97, and cysteine 100. Disordered regions lie at residues 166–186, 279–370, 770–790, and 834–859; these read HGVS…SRRS, EQFQ…DRTT, SDLS…NPIV, and QQNN…DHQS. A compositionally biased stretch (basic and acidic residues) spans 279 to 293; sequence EQFQKKSEHDGRDEC. The segment covering 324–345 has biased composition (acidic residues); it reads PENEEDERESALFDEEDNEGDA. Over residues 838-850 the composition is skewed to basic and acidic residues; it reads EKPKETQSQKEEF. Residues 1077–1111 adopt a coiled-coil conformation; it reads EKGFRRRIGELEEVLQKEKAEFEENMQKILHREVN. Residues 1151 to 1164 show a composition bias toward basic and acidic residues; the sequence is NSDDTKREENEKPP. The segment at 1151 to 1242 is disordered; that stretch reads NSDDTKREEN…DTSYPLENKV (92 aa). Composition is skewed to polar residues over residues 1167 to 1188 and 1196 to 1206; these read KSQT…SEVN and TGDTGSLNNVQ. Residues 1433 to 1758 enclose the PIPK domain; the sequence is SELNIPRPVD…RFRKAMTTYF (326 aa). A disordered region spans residues 1769–1791; sequence NVVANNSKSDQPEETSQAGTQAE. Over residues 1771-1791 the composition is skewed to polar residues; it reads VANNSKSDQPEETSQAGTQAE.

Component of the PI(3,5)P2 regulatory complex at least composed of ATG18, SAC/FIG4, FAB1 and VAC14. Mg(2+) serves as cofactor. Requires Mn(2+) as cofactor. As to expression, ubiquitous with highest expression levels in the root hair zone, pollen, and stamens.

Its subcellular location is the endosome membrane. The catalysed reaction is a 1,2-diacyl-sn-glycero-3-phospho-(1D-myo-inositol-3-phosphate) + ATP = a 1,2-diacyl-sn-glycero-3-phospho-(1D-myo-inositol-3,5-bisphosphate) + ADP + H(+). The PI(3,5)P2 regulatory complex regulates both the synthesis and turnover of phosphatidylinositol 3,5-bisphosphate (PtdIns(3,5)P2). Catalyzes the phosphorylation of phosphatidylinositol 3-phosphate on the fifth hydroxyl of the myo-inositol ring, to form phosphatidylinositol 3,5-bisphosphate. Plays an important role in maintenance of endomembrane homeostasis including endocytosis, vacuole formation, and vacuolar acidification processes. Required for development of viable pollen. Might mediate recycling of auxin transporters. This chain is 1-phosphatidylinositol-3-phosphate 5-kinase FAB1B (FAB1B), found in Arabidopsis thaliana (Mouse-ear cress).